Here is a 266-residue protein sequence, read N- to C-terminus: Glutamate racemase (266 aa).

Substrate is bound by residues 9-10 (DS) and 41-42 (YG). C72 (proton donor/acceptor) is an active-site residue. 73–74 (NT) lines the substrate pocket. C183 acts as the Proton donor/acceptor in catalysis. 184–185 (TH) provides a ligand contact to substrate.

The protein belongs to the aspartate/glutamate racemases family.

It catalyses the reaction L-glutamate = D-glutamate. The protein operates within cell wall biogenesis; peptidoglycan biosynthesis. Functionally, provides the (R)-glutamate required for cell wall biosynthesis. This is Glutamate racemase from Listeria monocytogenes serotype 4a (strain HCC23).